Here is a 92-residue protein sequence, read N- to C-terminus: Protein S100-B (92 aa).

The residue at position 2 (serine 2) is an N-acetylserine. 2 consecutive EF-hand domains span residues 13–48 (DVFH…LEEI) and 49–84 (KEQE…VTTA). Residue histidine 16 participates in Zn(2+) binding. Ca(2+) is bound by residues serine 19, glutamate 22, and aspartate 24. Zn(2+) is bound at residue histidine 26. 5 residues coordinate Ca(2+): aspartate 62, aspartate 64, aspartate 66, glutamate 68, and glutamate 73. Histidine 86 and histidine 91 together coordinate Zn(2+).

This sequence belongs to the S-100 family. In terms of assembly, dimer of either two alpha chains, or two beta chains, or one alpha and one beta chain. The S100B dimer binds two molecules of STK38. Interacts with CACYBP in a calcium-dependent manner. Interacts with ATAD3A; this interaction probably occurs in the cytosol prior to ATAD3A mitochondrial targeting. Interacts with S100A6. The S100B dimer interacts with two molecules of CAPZA1. Interacts with AGER. Interacts with PPP5C (via TPR repeats); the interaction is calcium-dependent and modulates PPP5C activity. Interacts with TPPP; this interaction inhibits TPPP dimerization. Interacts with isoform CLSTN3beta of CLSTN3; interaction promotes secretion.

Its subcellular location is the cytoplasm. The protein localises to the nucleus. It localises to the secreted. In terms of biological role, small zinc- and- and calcium-binding protein that is highly expressed in astrocytes and constitutes one of the most abundant soluble proteins in brain. Weakly binds calcium but binds zinc very tightly-distinct binding sites with different affinities exist for both ions on each monomer. Physiological concentrations of potassium ion antagonize the binding of both divalent cations, especially affecting high-affinity calcium-binding sites. Acts as a neurotrophic factor that promotes astrocytosis and axonal proliferation. Involved in innervation of thermogenic adipose tissue by acting as an adipocyte-derived neurotrophic factor that promotes sympathetic innervation of adipose tissue. Binds to and initiates the activation of STK38 by releasing autoinhibitory intramolecular interactions within the kinase. Interaction with AGER after myocardial infarction may play a role in myocyte apoptosis by activating ERK1/2 and p53/TP53 signaling. Could assist ATAD3A cytoplasmic processing, preventing aggregation and favoring mitochondrial localization. May mediate calcium-dependent regulation on many physiological processes by interacting with other proteins, such as TPR-containing proteins, and modulating their activity. The polypeptide is Protein S100-B (Mus musculus (Mouse)).